The chain runs to 591 residues: Frizzled-9 (591 aa).

The N-terminal stretch at 1–22 (MAVAPLRGALLLWQLLAAGGAA) is a signal peptide. The Extracellular portion of the chain corresponds to 23–229 (LEIGRFDPER…EVFWSRRDKD (207 aa)). Positions 34–155 (RGAAPCQAVE…NDPHALCMEA (122 aa)) constitute an FZ domain. 5 disulfide bridges follow: Cys-39/Cys-100, Cys-47/Cys-93, Cys-84/Cys-122, Cys-111/Cys-152, and Cys-115/Cys-139. Residue Asn-53 is glycosylated (N-linked (GlcNAc...) asparagine). A required for Wnt-activated receptor activity region spans residues 58–172 (PNLLGHTSQG…PAEPHKGLGM (115 aa)). An N-linked (GlcNAc...) asparagine glycan is attached at Asn-158. The helical transmembrane segment at 230 to 250 (FALVWMAVWSALCFFSTAFTV) threads the bilayer. The Cytoplasmic segment spans residues 251-266 (LTFLLEPHRFQYPERP). The helical transmembrane segment at 267 to 287 (IIFLSMCYNVYSLAFLIRAVA) threads the bilayer. Residues 288–315 (GAQSVACDQEAGALYVIQEGLENTGCTL) lie on the Extracellular side of the membrane. A helical transmembrane segment spans residues 316 to 336 (VFLLLYYFGMASSLWWVVLTL). Residues 337 to 355 (TWFLAAGKKWGHEAIEAHG) are Cytoplasmic-facing. Residues 356-376 (SYFHMAAWGLPALKTIVILTL) form a helical membrane-spanning segment. Over 377-400 (RKVAGDELTGLCYVASTDAAALTG) the chain is Extracellular. A helical transmembrane segment spans residues 401–421 (FVLVPLSGYLVLGSSFLLTGF). At 422-447 (VALFHIRKIMKTGGTNTEKLEKLMVK) the chain is on the cytoplasmic side. The chain crosses the membrane as a helical span at residues 448-468 (IGVFSILYTVPATCVIVCYVY). Over 469 to 508 (ERLNMDFWRLRATEQPCAAAAGPGGRRDCSLPGGSVPTVA) the chain is Extracellular. The helical transmembrane segment at 509-529 (VFMLKIFMSLVVGITSGVWVW) threads the bilayer. Residues 530-591 (SSKTFQTWQS…DPSLENPTHL (62 aa)) lie on the Cytoplasmic side of the membrane. The Lys-Thr-X-X-X-Trp motif, mediates interaction with the PDZ domain of Dvl family members signature appears at 532–537 (KTFQTW). The tract at residues 554 to 591 (ACRAPGSYGRGTHCHYKAPTVVLHMTKTDPSLENPTHL) is required for CTNNB1 accumulation and TCF transcription factor activity.

It belongs to the G-protein coupled receptor Fz/Smo family. Ubiquitinated by ZNRF3, leading to its degradation by the proteasome. In terms of tissue distribution, expressed predominantly in adult and fetal brain, testis, eye, skeletal muscle and kidney. Moderately expressed in pancreas, thyroid, adrenal cortex, small intestine and stomach. Detected in fetal liver and kidney. Expressed in neural progenitor cells.

Its subcellular location is the cell membrane. In terms of biological role, receptor for WNT2 that is coupled to the beta-catenin canonical signaling pathway, which leads to the activation of disheveled proteins, inhibition of GSK-3 kinase, nuclear accumulation of beta-catenin and activation of Wnt target genes. Plays a role in neuromuscular junction (NMJ) assembly by negatively regulating the clustering of acetylcholine receptors (AChR) through the beta-catenin canonical signaling pathway. May play a role in neural progenitor cells (NPCs) viability through the beta-catenin canonical signaling pathway by negatively regulating cell cycle arrest leading to inhibition of neuron apoptotic process. During hippocampal development, regulates neuroblast proliferation and apoptotic cell death. Controls bone formation through non canonical Wnt signaling mediated via ISG15. Positively regulates bone regeneration through non canonical Wnt signaling. The sequence is that of Frizzled-9 (FZD9) from Homo sapiens (Human).